Reading from the N-terminus, the 456-residue chain is Decaprenyl-diphosphate synthase (456 aa).

3 residues coordinate isopentenyl diphosphate: Lys-183, Arg-186, and His-216. The Mg(2+) site is built by Asp-223 and Asp-227. Position 233 (Arg-233) interacts with isopentenyl diphosphate.

This sequence belongs to the FPP/GGPP synthase family. Mg(2+) is required as a cofactor.

Its subcellular location is the mitochondrion. It catalyses the reaction 7 isopentenyl diphosphate + (2E,6E)-farnesyl diphosphate = all-trans-decaprenyl diphosphate + 7 diphosphate. It participates in cofactor biosynthesis; ubiquinone biosynthesis. Functionally, supplies decaprenyl diphosphate, the precursor for the side chain of the isoprenoid quinones ubiquinone-10. This Dictyostelium discoideum (Social amoeba) protein is Decaprenyl-diphosphate synthase (coq1).